A 206-amino-acid chain; its full sequence is Ribosomal RNA large subunit methyltransferase E (206 aa).

5 residues coordinate S-adenosyl-L-methionine: G63, W65, D83, D99, and D124. The Proton acceptor role is filled by K164.

Belongs to the class I-like SAM-binding methyltransferase superfamily. RNA methyltransferase RlmE family.

It localises to the cytoplasm. The catalysed reaction is uridine(2552) in 23S rRNA + S-adenosyl-L-methionine = 2'-O-methyluridine(2552) in 23S rRNA + S-adenosyl-L-homocysteine + H(+). Its function is as follows. Specifically methylates the uridine in position 2552 of 23S rRNA at the 2'-O position of the ribose in the fully assembled 50S ribosomal subunit. The sequence is that of Ribosomal RNA large subunit methyltransferase E from Buchnera aphidicola subsp. Acyrthosiphon pisum (strain APS) (Acyrthosiphon pisum symbiotic bacterium).